A 107-amino-acid polypeptide reads, in one-letter code: MILTTTHEIEGRRIERYLGIVFGEAIVGANVLRDLLAQIRDIVGGRSGAYEAELRRARETALAEMAEAARRLGADAVVGVDLDYEVLGSGNSMLMVTASGTAVKLAP.

The protein belongs to the UPF0145 family.

The chain is UPF0145 protein TT_C0892 from Thermus thermophilus (strain ATCC BAA-163 / DSM 7039 / HB27).